We begin with the raw amino-acid sequence, 619 residues long: Auxin efflux carrier component 7 (619 aa).

Residues 1-7 (MITWHDL) lie on the Extracellular side of the membrane. The chain crosses the membrane as a helical span at residues 8-28 (YTVLTAVIPLYVAMILAYGSV). Over 29–38 (RWWKIFSPDQ) the chain is Cytoplasmic. The helical transmembrane segment at 39–59 (CSGINRFVAIFAVPLLSFHFI) threads the bilayer. Val51 is a (indol-3-yl)acetate binding site. Topologically, residues 60–71 (SSNNPYAMNLRF) are extracellular. The helical transmembrane segment at 72–92 (IAADTLQKLIMLTLLIIWANF) threads the bilayer. At 93 to 101 (TRSGSLEWS) the chain is on the cytoplasmic side. Residues 102–122 (ITIFSLSTLPNTLVMGIPLLI) traverse the membrane as a helical segment. (indol-3-yl)acetate contacts are provided by Asn112 and Leu114. The Extracellular segment spans residues 123–131 (AMYGEYSGS). The chain crosses the membrane as a helical span at residues 132 to 152 (LMVQIVVLQCIIWYTLLLFLF). Tyr145 lines the (indol-3-yl)acetate pocket. Topologically, residues 153–479 (EYRGAKILIM…LIRNPNTYSS (327 aa)) are cytoplasmic. Phosphoserine occurs at positions 229, 246, and 286. The segment at 306–340 (GAPGSYPAPNPEFSTGNKTGSKAPKENHHHVGKSN) is disordered. Thr320 carries the post-translational modification Phosphothreonine. Residue Ser357 is modified to Phosphoserine. The interval 393-413 (HTQNGENKAGPMNGDYGGEEE) is disordered. A helical transmembrane segment spans residues 480-500 (LIGLIWALVAFRWDVAMPKII). Residues 501–503 (QQS) are Extracellular-facing. A helical transmembrane segment spans residues 504–524 (ISILSDAGLGMAMFSLGLFMA). Residues 525 to 538 (LQPKLIACGNSTAT) are Cytoplasmic-facing. Residues 539–559 (FAMAVRFFTGPAVMAVAAMAI) form a helical membrane-spanning segment. Residues 560 to 564 (GLRGD) lie on the Extracellular side of the membrane. A helical membrane pass occupies residues 565 to 585 (LLRVAIVQAALPQGIVPFVFA). (indol-3-yl)acetate contacts are provided by Ile579 and Val580. Residues 586–598 (KEYNVHPAILSTG) lie on the Cytoplasmic side of the membrane. The chain crosses the membrane as a helical span at residues 599–619 (VIFGMLIALPITLVYYILLGL).

Belongs to the auxin efflux carrier (TC 2.A.69.1) family. Homodimer.

It localises to the cell membrane. Acts as a component of the auxin efflux carrier. Mediates the initial auxin gradient which contributes to the establishment of the apical-basal axis in early embryogenesis. Together with PIN3 and PIN4, involved in the connective auxin transport (CAT) that ensures communication across the shoot system, and modulates strigolactone-mediated shoot branching control. The abcb19 pin3 pin4 pin7 quadruple mutant exhibits an additive phenotype on strigolactone-mediated bud outgrowth responses and shoot branching control. The sequence is that of Auxin efflux carrier component 7 from Arabidopsis thaliana (Mouse-ear cress).